The primary structure comprises 483 residues: Arginine/agmatine antiporter (483 aa).

The next 12 helical transmembrane spans lie at 11–31 (ILGT…GGIF), 41–61 (ASAG…FFIA), 85–105 (GFGP…QIFG), 124–144 (YFAG…IWIF), 157–177 (FVNI…ILIT), 208–228 (STML…VISG), 239–259 (ATIL…LLPF), 289–309 (VLMN…WTIL), 336–356 (PSFS…LVYF), 364–384 (MLEI…LFLV), 415–435 (LWLI…LLAL), and 458–478 (EILK…LFSA).

The protein belongs to the amino acid-polyamine-organocation (APC) superfamily. Basic amino acid/polyamine antiporter (APA) (TC 2.A.3.2) family.

It is found in the cell inner membrane. In terms of biological role, catalyzes the exchange of L-arginine for agmatine. The arginine uptake by the bacterium in the macrophage may be a virulence factor against the host innate immune response. This is Arginine/agmatine antiporter (aaxC) from Chlamydia trachomatis serovar A (strain ATCC VR-571B / DSM 19440 / HAR-13).